Reading from the N-terminus, the 303-residue chain is Quinolinate synthase (303 aa).

Iminosuccinate contacts are provided by H25 and S42. Residue C87 coordinates [4Fe-4S] cluster. Iminosuccinate is bound by residues 113 to 115 and S130; that span reads YVN. C174 serves as a coordination point for [4Fe-4S] cluster. Iminosuccinate-binding positions include 200 to 202 and T217; that span reads HPE. Residue C260 coordinates [4Fe-4S] cluster.

The protein belongs to the quinolinate synthase family. Type 2 subfamily. As to quaternary structure, homodimer. The cofactor is [4Fe-4S] cluster.

Its subcellular location is the cytoplasm. The catalysed reaction is iminosuccinate + dihydroxyacetone phosphate = quinolinate + phosphate + 2 H2O + H(+). It participates in cofactor biosynthesis; NAD(+) biosynthesis; quinolinate from iminoaspartate: step 1/1. Catalyzes the condensation of iminoaspartate with dihydroxyacetone phosphate to form quinolinate. The polypeptide is Quinolinate synthase (Pyrococcus furiosus (strain ATCC 43587 / DSM 3638 / JCM 8422 / Vc1)).